A 990-amino-acid chain; its full sequence is MSKSSTGRDERIGDFVIENEIGKGSFAVVHKGYRLQPREPVAIKIVIRKKLTPKLLDNLEGEIAILKAIHHPNIVELKECLKTEHQIYLVMAFCASGDLAQYIKKRFDIYERAGMAEPDSLTKGFKPTYPHPVDGGLNETIVRSILTQLAAALEFMRARDIVHRDIKPQNLLLQPPDAAFLALGNPREIPQMKVADFGFARHLSVNTLAETLCGSPLYMAPEILRFEKYDAKADLWSVGAVLFEMTVGKPPFRAANHVELLKRIERGEDKIKFPDERSAGSLAREAARRQELGEAPLPPPHPVSEDVKILIRQLLRQRPVSRMSFDDFFASPVISDFKAFIRPRAQPEAVERYEDLQRSERSVIIPSSGIKHVSVSSIEASTQQPGVQPPVSTATSPPALESRSTQEASPKAITGETIAPNKTPREDARPPRTLPRAFSAKYVTGEPPQPEDLEKRVPPTMTRTPSSPGIPEGSLLSGERDEAPQATTEHFGSSKGGEDSFLGKEYVLIEKQSVEVNALADELAASPQSRLGLASRRPSRLSRLSSGPLPSAPGASPPTAPPTILSSKPIRIANNTNTASTGAFALPPGSRPSSFPRRASLSSSGSPSTRQGGQVITNMDAVASTQSNRRDGNASSFPKDEVSVLGQRLAGFGLSGSGVGGGPSSALAKAISMASLRLFGVPSGVSLRDAAALVRTRAQRRGIARATDSLDEAEMTLLSTLEDLGQKAFVLSEFADSKLAHFFPDGPHQLSQELDSSTATSGISPSRNSVQGSARRVGSISSSSSSAVDPVAAEAASAEALMLYVRSLAFLQRAITLTKRHVESRSRPGVPAVTSAELNDVVQWLRARFNEVYDKADFARSRCSELPESAQQVDKLIFDKAVEVARAAATDELENNREGSGWDPSHCLLAYETANSMLSSLLDPGEDAMSLSEGSILMIDGYVKSINKRLWTLQEQFGGGVGAVGAAGASPVGVDAEARPGVSRSRTESP.

Residues F15–I334 enclose the Protein kinase domain. Residues I21 to V29 and K44 contribute to the ATP site. Catalysis depends on D165, which acts as the Proton acceptor. The segment covering V375–A408 has biased composition (polar residues). 5 disordered regions span residues V375–D499, S529–S566, A579–Q614, L750–S784, and S970–P990. Composition is skewed to low complexity over residues S529–G554 and P587–G613. Residues L750–Q771 are compositionally biased toward polar residues. The span at G772 to S784 shows a compositional bias: low complexity.

The protein belongs to the protein kinase superfamily. Ser/Thr protein kinase family. APG1/unc-51/ULK1 subfamily. Homodimer. Forms a ternary complex with ATG13 and ATG17.

Its subcellular location is the cytoplasm. The protein resides in the preautophagosomal structure membrane. It catalyses the reaction L-seryl-[protein] + ATP = O-phospho-L-seryl-[protein] + ADP + H(+). The enzyme catalyses L-threonyl-[protein] + ATP = O-phospho-L-threonyl-[protein] + ADP + H(+). In terms of biological role, serine/threonine protein kinase involved in the cytoplasm to vacuole transport (Cvt) and found to be essential in autophagy, where it is required for the formation of autophagosomes. Involved in the clearance of protein aggregates which cannot be efficiently cleared by the proteasome. Required for selective autophagic degradation of the nucleus (nucleophagy) as well as for mitophagy which contributes to regulate mitochondrial quantity and quality by eliminating the mitochondria to a basal level to fulfill cellular energy requirements and preventing excess ROS production. Also involved in endoplasmic reticulum-specific autophagic process, in selective removal of ER-associated degradation (ERAD) substrates. Plays a key role in ATG9 and ATG23 cycling through the pre-autophagosomal structure and is necessary to promote ATG18 binding to ATG9 through phosphorylation of ATG9. Catalyzes phosphorylation of ATG4, decreasing the interaction between ATG4 and ATG8 and impairing deconjugation of PE-conjugated forms of ATG8. Required for wild-type budding of haploid sporidia and for complete symptom development during pathogenic growth such as gall formation and teliospore production in ears of mature maize. In Mycosarcoma maydis (Corn smut fungus), this protein is Serine/threonine-protein kinase ATG1.